The following is a 54-amino-acid chain: GIDPNYRTSRPEVGTHEGHKVYGPVENPKVLGIHGAIVGVDFDLCIADGSCINA.

Residues 1 to 21 form a disordered region; the sequence is GIDPNYRTSRPEVGTHEGHKV. The N-terminal extension stretch occupies residues 1–36; sequence GIDPNYRTSRPEVGTHEGHKVYGPVENPKVLGIHGA. Positions 9-20 are enriched in basic and acidic residues; sequence SRPEVGTHEGHK. The Zn(2+) site is built by histidine 16 and histidine 19. Lysine 29 is modified (N6-methyllysine). Position 34 (histidine 34) interacts with Zn(2+). Residues 35–54 form the 4Fe-4S ferredoxin-type 1 domain; that stretch reads GAIVGVDFDLCIADGSCINA. [3Fe-4S] cluster-binding residues include cysteine 45 and cysteine 51.

It depends on [3Fe-4S] cluster as a cofactor. Requires [4Fe-4S] cluster as cofactor. The cofactor is Zn(2+).

In terms of biological role, ferredoxins are iron-sulfur proteins that transfer electrons in a wide variety of metabolic reactions. This is Zinc-containing ferredoxin A (zfx) from Sulfuracidifex metallicus (Sulfolobus metallicus).